The following is a 602-amino-acid chain: Isocitrate dehydrogenase kinase/phosphatase (602 aa).

ATP is bound by residues 327–333 (APGIKGM) and lysine 348. Aspartate 383 is an active-site residue.

It belongs to the AceK family.

It is found in the cytoplasm. It catalyses the reaction L-seryl-[isocitrate dehydrogenase] + ATP = O-phospho-L-seryl-[isocitrate dehydrogenase] + ADP + H(+). Its function is as follows. Bifunctional enzyme which can phosphorylate or dephosphorylate isocitrate dehydrogenase (IDH) on a specific serine residue. This is a regulatory mechanism which enables bacteria to bypass the Krebs cycle via the glyoxylate shunt in response to the source of carbon. When bacteria are grown on glucose, IDH is fully active and unphosphorylated, but when grown on acetate or ethanol, the activity of IDH declines drastically concomitant with its phosphorylation. The polypeptide is Isocitrate dehydrogenase kinase/phosphatase (Paraburkholderia phymatum (strain DSM 17167 / CIP 108236 / LMG 21445 / STM815) (Burkholderia phymatum)).